A 150-amino-acid polypeptide reads, in one-letter code: Large ribosomal subunit protein uL13 (150 aa).

This sequence belongs to the universal ribosomal protein uL13 family. As to quaternary structure, part of the 50S ribosomal subunit.

Functionally, this protein is one of the early assembly proteins of the 50S ribosomal subunit, although it is not seen to bind rRNA by itself. It is important during the early stages of 50S assembly. The sequence is that of Large ribosomal subunit protein uL13 from Persephonella marina (strain DSM 14350 / EX-H1).